A 245-amino-acid polypeptide reads, in one-letter code: 1-(5-phosphoribosyl)-5-[(5-phosphoribosylamino)methylideneamino] imidazole-4-carboxamide isomerase (245 aa).

Asp-8 acts as the Proton acceptor in catalysis. Residue Asp-129 is the Proton donor of the active site.

This sequence belongs to the HisA/HisF family.

The protein resides in the cytoplasm. The catalysed reaction is 1-(5-phospho-beta-D-ribosyl)-5-[(5-phospho-beta-D-ribosylamino)methylideneamino]imidazole-4-carboxamide = 5-[(5-phospho-1-deoxy-D-ribulos-1-ylimino)methylamino]-1-(5-phospho-beta-D-ribosyl)imidazole-4-carboxamide. Its pathway is amino-acid biosynthesis; L-histidine biosynthesis; L-histidine from 5-phospho-alpha-D-ribose 1-diphosphate: step 4/9. The polypeptide is 1-(5-phosphoribosyl)-5-[(5-phosphoribosylamino)methylideneamino] imidazole-4-carboxamide isomerase (Heliobacterium modesticaldum (strain ATCC 51547 / Ice1)).